The primary structure comprises 491 residues: Peptidoglycan D,D-transpeptidase PbpA (491 aa).

Topologically, residues 1 to 7 (MNASLRR) are cytoplasmic. The chain crosses the membrane as a helical; Signal-anchor for type II membrane protein span at residues 8 to 28 (ISVTVMALIVLLLLNATMTQV). Over 29–491 (FTADGLRADP…VIEAALQGEP (463 aa)) the chain is Periplasmic. The transpeptidase stretch occupies residues 160-484 (GAVVALEPST…AAPIGRAVIE (325 aa)). The active-site Acyl-ester intermediate is the Ser222.

It belongs to the transpeptidase family.

Its subcellular location is the cell inner membrane. The enzyme catalyses Preferential cleavage: (Ac)2-L-Lys-D-Ala-|-D-Ala. Also transpeptidation of peptidyl-alanyl moieties that are N-acyl substituents of D-alanine.. The protein operates within cell wall biogenesis; peptidoglycan biosynthesis. Transpeptidase that catalyzes cross-linking of the peptidoglycan cell wall. Required for the regulation of cell length. The sequence is that of Peptidoglycan D,D-transpeptidase PbpA (pbpA) from Mycobacterium tuberculosis (strain CDC 1551 / Oshkosh).